Consider the following 353-residue polypeptide: Holliday junction branch migration complex subunit RuvB (353 aa).

Residues 4–185 form a large ATPase domain (RuvB-L) region; sequence ADRLITAAGG…FGIVQRLEFY (182 aa). Residues Ile-24, Arg-25, Gly-66, Lys-69, Thr-70, Thr-71, 132–134, Arg-175, Tyr-185, and Arg-222 contribute to the ATP site; that span reads EDF. Mg(2+) is bound at residue Thr-70. Positions 186 to 256 are small ATPAse domain (RuvB-S); sequence NIADLSTIVS…TADKALNLLD (71 aa). Positions 259 to 353 are head domain (RuvB-H); sequence EHGFDHQDRR…DDVVDDPADL (95 aa). Residues Arg-295, Arg-314, and Arg-319 each coordinate DNA.

It belongs to the RuvB family. Homohexamer. Forms an RuvA(8)-RuvB(12)-Holliday junction (HJ) complex. HJ DNA is sandwiched between 2 RuvA tetramers; dsDNA enters through RuvA and exits via RuvB. An RuvB hexamer assembles on each DNA strand where it exits the tetramer. Each RuvB hexamer is contacted by two RuvA subunits (via domain III) on 2 adjacent RuvB subunits; this complex drives branch migration. In the full resolvosome a probable DNA-RuvA(4)-RuvB(12)-RuvC(2) complex forms which resolves the HJ.

Its subcellular location is the cytoplasm. The catalysed reaction is ATP + H2O = ADP + phosphate + H(+). In terms of biological role, the RuvA-RuvB-RuvC complex processes Holliday junction (HJ) DNA during genetic recombination and DNA repair, while the RuvA-RuvB complex plays an important role in the rescue of blocked DNA replication forks via replication fork reversal (RFR). RuvA specifically binds to HJ cruciform DNA, conferring on it an open structure. The RuvB hexamer acts as an ATP-dependent pump, pulling dsDNA into and through the RuvAB complex. RuvB forms 2 homohexamers on either side of HJ DNA bound by 1 or 2 RuvA tetramers; 4 subunits per hexamer contact DNA at a time. Coordinated motions by a converter formed by DNA-disengaged RuvB subunits stimulates ATP hydrolysis and nucleotide exchange. Immobilization of the converter enables RuvB to convert the ATP-contained energy into a lever motion, pulling 2 nucleotides of DNA out of the RuvA tetramer per ATP hydrolyzed, thus driving DNA branch migration. The RuvB motors rotate together with the DNA substrate, which together with the progressing nucleotide cycle form the mechanistic basis for DNA recombination by continuous HJ branch migration. Branch migration allows RuvC to scan DNA until it finds its consensus sequence, where it cleaves and resolves cruciform DNA. In Pseudomonas savastanoi pv. phaseolicola (strain 1448A / Race 6) (Pseudomonas syringae pv. phaseolicola (strain 1448A / Race 6)), this protein is Holliday junction branch migration complex subunit RuvB.